The following is a 322-amino-acid chain: Interferon regulatory factor 1 (322 aa).

The segment at residues R5–P113 is a DNA-binding region (IRF tryptophan pentad repeat). K78 bears the N6-acetyllysine mark. Residues E92 to Y164 are disordered. Residues G141–L157 are compositionally biased toward polar residues. Glycyl lysine isopeptide (Lys-Gly) (interchain with G-Cter in SUMO) cross-links involve residues K276 and K296.

This sequence belongs to the IRF family. Monomer. Homodimer. Interacts with EP300. Interacts with MYD88. Interacts with PIAS3. Interacts with SPOP. Post-translationally, phosphorylated by CK2 and this positively regulates its activity. Sumoylation represses the transcriptional activity and displays enhanced resistance to protein degradation. Sumoylated by UBE2I/UBC9 and SUMO1. Inactivates the tumor suppressor activity. Elevated levels in tumor cells. Major site is Lys-276. Sumoylation is enhanced by PIAS3. Desumoylated by SENP1 in tumor cells and appears to compete with ubiquitination on C-terminal sites. In terms of processing, ubiquitinated in a SPOP-depedent manner. Appears to compete with sumoylation on C-terminal sites.

It is found in the nucleus. It localises to the cytoplasm. Its activity is regulated as follows. Activated by MYD88. Its function is as follows. Transcriptional regulator which displays a remarkable functional diversity in the regulation of cellular responses. Regulates transcription of IFN and IFN-inducible genes, host response to viral and bacterial infections, regulation of many genes expressed during hematopoiesis, inflammation, immune responses and cell proliferation and differentiation, regulation of the cell cycle and induction of growth arrest and programmed cell death following DNA damage. Stimulates both innate and acquired immune responses through the activation of specific target genes and can act as a transcriptional activator and repressor regulating target genes by binding to an interferon-stimulated response element (ISRE) in their promoters. Has an essentail role in IFNG-dependent immunity to mycobacteria. Binds to a consensus sequence in gene promoters. Its target genes for transcriptional activation activity include: genes involved in anti-viral response, such as IFN-alpha/beta, RIGI, TNFSF10/TRAIL, ZBP1, OAS1/2, PIAS1/GBP, EIF2AK2/PKR and RSAD2/viperin; antibacterial response, such as GBP2, GBP5 and NOS2/INOS; anti-proliferative response, such as p53/TP53, LOX and CDKN1A; apoptosis, such as BBC3/PUMA, CASP1, CASP7 and CASP8; immune response, such as IL7, IL12A/B and IL15, PTGS2/COX2 and CYBB; DNA damage responses and DNA repair, such as POLQ/POLH; MHC class I expression, such as TAP1, PSMB9/LMP2, PSME1/PA28A, PSME2/PA28B and B2M and MHC class II expression, such as CIITA; metabolic enzymes, such as ACOD1/IRG1. Represses genes involved in anti-proliferative response, such as BIRC5/survivin, CCNB1, CCNE1, CDK1, CDK2 and CDK4 and in immune response, such as FOXP3, IL4, ANXA2 and TLR4. Stimulates p53/TP53-dependent transcription through enhanced recruitment of EP300 leading to increased acetylation of p53/TP53. Plays an important role in immune response directly affecting NK maturation and activity, macrophage production of IL12, Th1 development and maturation of CD8+ T-cells. Also implicated in the differentiation and maturation of dendritic cells and in the suppression of regulatory T (Treg) cells development. Acts as a tumor suppressor and plays a role not only in antagonism of tumor cell growth but also in stimulating an immune response against tumor cells. The protein is Interferon regulatory factor 1 (IRF1) of Sus scrofa (Pig).